A 270-amino-acid polypeptide reads, in one-letter code: Tetraspanin-17 (270 aa).

At 1-19 the chain is on the cytoplasmic side; it reads MPGKHQQFQDPEVGCCGKY. Residues 20–40 traverse the membrane as a helical segment; sequence FLFGFNIVFWVLGALFLAIGL. Residues 41-63 are Extracellular-facing; sequence WAWGEKGVLSNISALTDLGGLDP. Asn51 carries N-linked (GlcNAc...) asparagine glycosylation. Residues 64–84 form a helical membrane-spanning segment; the sequence is VWLFVVVGGVMSVLGFAGCIG. Over 85 to 94 the chain is Cytoplasmic; it reads ALRENTFLLK. A helical membrane pass occupies residues 95–115; sequence FFSVFLGLIFFLELAAGILAF. Residues 116–234 lie on the Extracellular side of the membrane; it reads VFKDWIRDQL…GQFEKWLQDN (119 aa). Cystine bridges form between Cys155–Cys223, Cys156–Cys188, Cys172–Cys182, and Cys189–Cys202. An N-linked (GlcNAc...) asparagine glycan is attached at Asn171. Residues 235–255 form a helical membrane-spanning segment; that stretch reads LIVVAGVLVGIALLQIFGLCL. The Cytoplasmic segment spans residues 256 to 270; sequence AQNLVSDIKAVKANW.

The protein belongs to the tetraspanin (TM4SF) family. Interacts with ADAM10; the interaction influences ADAM10 substrate specificity, endocytosis and turnover.

It is found in the cell membrane. Functionally, part of TspanC8 subgroup, composed of 6 members that interact with the transmembrane metalloprotease ADAM10. This interaction is required for ADAM10 exit from the endoplasmic reticulum and for enzymatic maturation and trafficking to the cell surface as well as substrate specificity. Different TspanC8/ADAM10 complexes have distinct substrates. Seems to regulate VE-cadherin expression in endothelial cells probably through interaction with ADAM10, promoting leukocyte transmigration. The polypeptide is Tetraspanin-17 (Tspan17) (Mus musculus (Mouse)).